A 361-amino-acid polypeptide reads, in one-letter code: Chorismate synthase (361 aa).

NADP(+) is bound at residue arginine 48. FMN-binding positions include 126 to 128 (RFS), glycine 286, 301 to 305 (KPTPS), and arginine 328.

It belongs to the chorismate synthase family. It depends on FMNH2 as a cofactor.

It catalyses the reaction 5-O-(1-carboxyvinyl)-3-phosphoshikimate = chorismate + phosphate. It participates in metabolic intermediate biosynthesis; chorismate biosynthesis; chorismate from D-erythrose 4-phosphate and phosphoenolpyruvate: step 7/7. Functionally, catalyzes the anti-1,4-elimination of the C-3 phosphate and the C-6 proR hydrogen from 5-enolpyruvylshikimate-3-phosphate (EPSP) to yield chorismate, which is the branch point compound that serves as the starting substrate for the three terminal pathways of aromatic amino acid biosynthesis. This reaction introduces a second double bond into the aromatic ring system. This Korarchaeum cryptofilum (strain OPF8) protein is Chorismate synthase.